The primary structure comprises 75 residues: Cruzioseptin-7 (75 aa).

A signal peptide spans 1–22; sequence MAKLKKSLFLVLFLGLVSLSIC. Positions 23 to 43 are excised as a propeptide; that stretch reads EEEKREEENEEVQEDDDQSEE. Residues 25–44 are disordered; that stretch reads EKREEENEEVQEDDDQSEEK. The segment covering 30 to 41 has biased composition (acidic residues); it reads ENEEVQEDDDQS.

Expressed by the skin glands.

The protein resides in the secreted. In terms of biological role, has antimicrobial activity. The chain is Cruzioseptin-7 from Cruziohyla calcarifer (Splendid leaf frog).